A 127-amino-acid chain; its full sequence is Protein ApaG (127 aa).

The 125-residue stretch at 3 to 127 (DQPPTEIQIS…FRLAAATVFH (125 aa)) folds into the ApaG domain.

This Acidithiobacillus ferrooxidans (strain ATCC 23270 / DSM 14882 / CIP 104768 / NCIMB 8455) (Ferrobacillus ferrooxidans (strain ATCC 23270)) protein is Protein ApaG.